We begin with the raw amino-acid sequence, 224 residues long: 4'-phosphopantetheinyl transferase ffp (224 aa).

Asp107, Glu109, and Glu151 together coordinate Mg(2+). The segment at 158 to 189 (GKGLSLPLDSFSVRLHEDGRVSVELPEHHTPC) is peptidyl carrier protein binding.

This sequence belongs to the P-Pant transferase superfamily. Gsp/Sfp/HetI/AcpT family. The cofactor is Mg(2+).

It catalyses the reaction apo-[peptidyl-carrier protein] + CoA = holo-[peptidyl-carrier protein] + adenosine 3',5'-bisphosphate + H(+). May activate the peptidyl carrier protein (PCP) domains of fengycin synthase by transferring the 4'-phosphopantetheinyl moiety of coenzyme A (CoA) to a serine residue. The protein is 4'-phosphopantetheinyl transferase ffp (ffp) of Bacillus subtilis.